We begin with the raw amino-acid sequence, 247 residues long: UPF0273 protein PH0284 (247 aa).

In terms of domain architecture, KaiC spans R3–L247. G30–T37 is a binding site for ATP.

Belongs to the UPF0273 family.

The polypeptide is UPF0273 protein PH0284 (Pyrococcus horikoshii (strain ATCC 700860 / DSM 12428 / JCM 9974 / NBRC 100139 / OT-3)).